Here is a 91-residue protein sequence, read N- to C-terminus: Auxin-responsive protein SAUR20 (91 aa).

This sequence belongs to the ARG7 family.

It is found in the cell membrane. In terms of biological role, functions as a positive effector of cell expansion through modulation of auxin transport. The chain is Auxin-responsive protein SAUR20 from Arabidopsis thaliana (Mouse-ear cress).